Reading from the N-terminus, the 388-residue chain is Na(+)/H(+) antiporter NhaA (388 aa).

At 1–11 (MKHLHRFFSSD) the chain is on the cytoplasmic side. The helical transmembrane segment at 12–31 (ASGGIILIIAAILAMMMANS) threads the bilayer. At 32-58 (GATSGWYHDFLETPVQLRVGSLEINKN) the chain is on the periplasmic side. A helical membrane pass occupies residues 59 to 80 (MLLWINDALMAVFFLLVGLEVK). Residues 81 to 96 (RELMQGSLASLRQAAF) are Cytoplasmic-facing. The helical transmembrane segment at 97–116 (PVIAAIGGMIVPALLYLAFN) threads the bilayer. Residues 117 to 122 (YADPIT) lie on the Periplasmic side of the membrane. A helical membrane pass occupies residues 123–130 (REGWAIPA). Residues 131-154 (ATDIAFALGVLALLGSRVPLALKI) lie on the Cytoplasmic side of the membrane. A helical transmembrane segment spans residues 155–176 (FLMALAIIDDLGAIIIIALFYT). Residues 177–180 (NDLS) lie on the Periplasmic side of the membrane. A helical transmembrane segment spans residues 181–200 (MASLGVAAVAIAVLAVLNLC). At 201 to 204 (GVRR) the chain is on the cytoplasmic side. The chain crosses the membrane as a helical span at residues 205 to 222 (TGVYILVGVVLWTAVLKS). Gly-223 is a topological domain (periplasmic). The helical transmembrane segment at 224-236 (VHATLAGVIVGFF) threads the bilayer. Topologically, residues 237–253 (IPLKEKHGRSTAKRLEH) are cytoplasmic. A helical transmembrane segment spans residues 254–272 (VLHPWVAYLILPLFAFANA). At 273–286 (GVSLQGVTLDGLTS) the chain is on the periplasmic side. A helical membrane pass occupies residues 287–310 (ILPLGIIAGLLIGKPLGISLFCWL). The Cytoplasmic segment spans residues 311–339 (ALRLKLAHLPEGTTYQQIMAVGILCGIGF). A helical membrane pass occupies residues 340–350 (TMSIFIASLAF). At 351-357 (GSVDPEL) the chain is on the periplasmic side. A helical membrane pass occupies residues 358-380 (INWAKLGILVGSISSAVIGYSWL). At 381–388 (RVRLRPSV) the chain is on the cytoplasmic side.

The protein belongs to the NhaA Na(+)/H(+) (TC 2.A.33) antiporter family.

The protein localises to the cell inner membrane. The enzyme catalyses Na(+)(in) + 2 H(+)(out) = Na(+)(out) + 2 H(+)(in). Its function is as follows. Na(+)/H(+) antiporter that extrudes sodium in exchange for external protons. The sequence is that of Na(+)/H(+) antiporter NhaA from Shigella dysenteriae serotype 1 (strain Sd197).